A 516-amino-acid chain; its full sequence is DNA-(apurinic or apyrimidinic site) endonuclease 2 (516 aa).

2 residues coordinate Mg(2+): Asn-8 and Glu-47. The active site involves Tyr-155. Mg(2+) contacts are provided by Asp-196, Asn-198, Asp-302, and His-303. The Proton donor/acceptor role is filled by Asp-196. His-303 functions as the Proton acceptor in the catalytic mechanism. Residues 357-366 show a composition bias toward polar residues; it reads QPSHQIQAQR. Residues 357 to 389 form a disordered region; sequence QPSHQIQAQRQPRKACMHSTRLRKSQGGPKRKQ. Residues 367–389 show a composition bias toward basic residues; the sequence is QPRKACMHSTRLRKSQGGPKRKQ. Residue Lys-370 forms a Glycyl lysine isopeptide (Lys-Gly) (interchain with G-Cter in ubiquitin) linkage. Residues 389-396 are required for the interaction and colocalization with PCNA in nuclear foci in presence of oxidative-induced DNA damaging agents; sequence QKNLMSYF. Residues Cys-467, His-470, Cys-493, and Cys-507 each contribute to the Zn(2+) site. Residues 467 to 516 form a GRF-type zinc finger; it reads CGGHREPCVMRTVKKTGPNFGRQFYMCARPRGPPSDPSSRCNFFLWSRPS.

Belongs to the DNA repair enzymes AP/ExoA family. In terms of assembly, interacts with PCNA. This interaction is increased by misincorporation of uracil in nuclear DNA. The cofactor is Mg(2+). Requires Mn(2+) as cofactor. Ubiquitinated by the CUL9-RBX1 complex. Ubiquitinated by MKRN3 at Lys-370 leading to proteasomal degradation. Expressed in lymphocytes, thymocytes and splenocytes (at protein level). Highly expressed in the thymus and weakly expressed in the bone marrow, spleen, eye, kidney, lung, brain and uterus.

It localises to the nucleus. It is found in the cytoplasm. The protein localises to the mitochondrion. It catalyses the reaction Exonucleolytic cleavage in the 3'- to 5'-direction to yield nucleoside 5'-phosphates.. 3'-5' exonuclease activity is activated by sodium and manganese. 3'-5' exonuclease and 3'-phosphodiesterase activities are stimulated in presence of PCNA. In terms of biological role, functions as a weak apurinic/apyrimidinic (AP) endodeoxyribonuclease in the DNA base excision repair (BER) pathway of DNA lesions induced by oxidative and alkylating agents. Initiates repair of AP sites in DNA by catalyzing hydrolytic incision of the phosphodiester backbone immediately adjacent to the damage, generating a single-strand break with 5'-deoxyribose phosphate and 3'-hydroxyl ends. Also displays double-stranded DNA 3'-5' exonuclease, 3'-phosphodiesterase activities. Shows robust 3'-5' exonuclease activity on 3'-recessed heteroduplex DNA and is able to remove mismatched nucleotides preferentially. Shows fairly strong 3'-phosphodiesterase activity involved in the removal of 3'-damaged termini formed in DNA by oxidative agents. In the nucleus functions in the PCNA-dependent BER pathway. Plays a role in reversing blocked 3' DNA ends, problematic lesions that preclude DNA synthesis. Required for somatic hypermutation (SHM) and DNA cleavage step of class switch recombination (CSR) of immunoglobulin genes. Required for proper cell cycle progression during proliferation of peripheral lymphocytes. The polypeptide is DNA-(apurinic or apyrimidinic site) endonuclease 2 (Apex2) (Mus musculus (Mouse)).